We begin with the raw amino-acid sequence, 166 residues long: Regulator of ribonuclease activity A (166 aa).

The protein belongs to the RraA family. Homotrimer. Binds to both RNA-binding sites in the C-terminal region of Rne and to RhlB.

Its subcellular location is the cytoplasm. Its function is as follows. Globally modulates RNA abundance by binding to RNase E (Rne) and regulating its endonucleolytic activity. Can modulate Rne action in a substrate-dependent manner by altering the composition of the degradosome. Modulates RNA-binding and helicase activities of the degradosome. This Pasteurella multocida (strain Pm70) protein is Regulator of ribonuclease activity A.